Here is a 532-residue protein sequence, read N- to C-terminus: Putative cysteine ligase BshC (532 aa).

Residues 431 to 451 (MAQAKDALAKVDASLVEAAER) adopt a coiled-coil conformation.

This sequence belongs to the BshC family.

This is Putative cysteine ligase BshC from Koribacter versatilis (strain Ellin345).